Here is a 198-residue protein sequence, read N- to C-terminus: Ribosomal RNA small subunit methyltransferase G (198 aa).

Residues Gly74, Phe79, 123 to 124 (IQ), and Arg136 each bind S-adenosyl-L-methionine.

Belongs to the methyltransferase superfamily. RNA methyltransferase RsmG family.

It localises to the cytoplasm. It catalyses the reaction guanosine(527) in 16S rRNA + S-adenosyl-L-methionine = N(7)-methylguanosine(527) in 16S rRNA + S-adenosyl-L-homocysteine. Specifically methylates the N7 position of guanine in position 527 of 16S rRNA. This Orientia tsutsugamushi (strain Ikeda) (Rickettsia tsutsugamushi) protein is Ribosomal RNA small subunit methyltransferase G.